The sequence spans 386 residues: Transcription factor GTE1 (386 aa).

Disordered regions lie at residues 66-106 (GAAQ…KHVS) and 340-386 (ANKS…AKKA). Residues 68–78 (AQTNTSKSNSG) are compositionally biased toward polar residues. Residues 105–211 (VSSPDLMRQF…EKFEEKWLLI (107 aa)) enclose the Bromo domain. Positions 263–344 (RESVVQRCRK…EALKAANKSS (82 aa)) constitute an NET domain. The segment covering 345–358 (GGTNAQNNNNTGTG) has biased composition (low complexity).

In terms of tissue distribution, barely detectable in stems, leaves, siliques, and dry seeds, but was present at considerable levels in roots, flowers and imbibited seeds.

The protein localises to the nucleus. Functionally, transcription activator that plays a role in the promotion of seed germination by both negatively and positively regulating the abscisic acid (ABA) and phytochrome A (phyA) transduction pathways, respectively. This Arabidopsis thaliana (Mouse-ear cress) protein is Transcription factor GTE1 (GTE1).